The chain runs to 1067 residues: Cadmium/zinc-transporting ATPase HMA2 (1067 aa).

An HMA domain is found at 9-75 (QKSYFDVLGI…ALNQARLEAS (67 aa)). A run of 8 helical transmembrane segments spans residues 94–114 (YVLL…WHPL), 117–137 (FALV…IAAI), 140–160 (LTLD…ALKD), 162–182 (SEAG…TRAS), 313–333 (YTPA…IAKA), 342–362 (LALV…TPIA), 649–669 (IIVN…LAFA), and 673–693 (LIWA…MYSM). Disordered stretches follow at residues 711 to 739 (HHGS…HHCS), 760 to 790 (HDHH…SHGH), and 960 to 996 (NDTH…GHHP). Basic residues predominate over residues 724-735 (HGSHAKKNHGVS). 2 stretches are compositionally biased toward basic and acidic residues: residues 760–774 (HDHH…EPAH) and 975–996 (SSDH…GHHP).

It belongs to the cation transport ATPase (P-type) (TC 3.A.3) family. Type IB subfamily. In terms of tissue distribution, in roots, localizes at the pericycle cells. In nodes, localizes in the phloem parenchyma and companion cells of both enlarged and diffuse vascular bundles.

The protein localises to the cell membrane. It carries out the reaction Zn(2+)(in) + ATP + H2O = Zn(2+)(out) + ADP + phosphate + H(+). The catalysed reaction is Cd(2+)(in) + ATP + H2O = Cd(2+)(out) + ADP + phosphate + H(+). Functionally, zinc/cadmium transporter that plays an essential role in promoting translocation of zinc and cadmium from roots to shoots. May control cadmium loading into xylem. In roots, transports zinc and cadmium from the apoplast to the symplast to facilitate translocation via the phloem. In nodes, functions to load zinc and cadmium to the phloem for the preferential distribution to the upper nodes and panicles. The chain is Cadmium/zinc-transporting ATPase HMA2 from Oryza sativa subsp. japonica (Rice).